Consider the following 156-residue polypeptide: Transcriptional repressor NrdR (156 aa).

A zinc finger spans residues 3–34 (CPKCNSTQSKVVDSRHADELNAIRRRRECENC). The ATP-cone domain occupies 49-139 (LIVVKKDGTR…VYKEFKDVDQ (91 aa)).

It belongs to the NrdR family. Requires Zn(2+) as cofactor.

Its function is as follows. Negatively regulates transcription of bacterial ribonucleotide reductase nrd genes and operons by binding to NrdR-boxes. The chain is Transcriptional repressor NrdR from Staphylococcus aureus (strain NCTC 8325 / PS 47).